We begin with the raw amino-acid sequence, 345 residues long: Dihydroorotate dehydrogenase (quinone) (345 aa).

FMN-binding positions include 65–69 (AGLDK) and Thr-89. Lys-69 contributes to the substrate binding site. Residue 114-118 (NRMGF) participates in substrate binding. Asn-142 and Asn-175 together coordinate FMN. Residue Asn-175 participates in substrate binding. Ser-178 functions as the Nucleophile in the catalytic mechanism. Position 180 (Asn-180) interacts with substrate. The FMN site is built by Lys-220 and Thr-248. A substrate-binding site is contributed by 249 to 250 (NT). Residues Gly-271, Gly-300, and 321–322 (YT) each bind FMN.

It belongs to the dihydroorotate dehydrogenase family. Type 2 subfamily. Monomer. FMN serves as cofactor.

It localises to the cell membrane. The catalysed reaction is (S)-dihydroorotate + a quinone = orotate + a quinol. The protein operates within pyrimidine metabolism; UMP biosynthesis via de novo pathway; orotate from (S)-dihydroorotate (quinone route): step 1/1. Catalyzes the conversion of dihydroorotate to orotate with quinone as electron acceptor. The sequence is that of Dihydroorotate dehydrogenase (quinone) from Burkholderia mallei (strain NCTC 10247).